The primary structure comprises 134 residues: Large ribosomal subunit protein eL32 (134 aa).

This sequence belongs to the eukaryotic ribosomal protein eL32 family.

The polypeptide is Large ribosomal subunit protein eL32 (RPL32) (Tetrahymena thermophila (strain SB210)).